A 59-amino-acid chain; its full sequence is UPF0434 protein plu1633 (59 aa).

This sequence belongs to the UPF0434 family.

This is UPF0434 protein plu1633 from Photorhabdus laumondii subsp. laumondii (strain DSM 15139 / CIP 105565 / TT01) (Photorhabdus luminescens subsp. laumondii).